The following is a 180-amino-acid chain: Protein GrpE (180 aa).

Residues 1–21 (MSEEVKEQNLPEVEPVQEAAS) are disordered.

This sequence belongs to the GrpE family. As to quaternary structure, homodimer.

It localises to the cytoplasm. Its function is as follows. Participates actively in the response to hyperosmotic and heat shock by preventing the aggregation of stress-denatured proteins, in association with DnaK and GrpE. It is the nucleotide exchange factor for DnaK and may function as a thermosensor. Unfolded proteins bind initially to DnaJ; upon interaction with the DnaJ-bound protein, DnaK hydrolyzes its bound ATP, resulting in the formation of a stable complex. GrpE releases ADP from DnaK; ATP binding to DnaK triggers the release of the substrate protein, thus completing the reaction cycle. Several rounds of ATP-dependent interactions between DnaJ, DnaK and GrpE are required for fully efficient folding. This is Protein GrpE from Campylobacter concisus (strain 13826).